We begin with the raw amino-acid sequence, 375 residues long: Trans-enoyl reductase cghC (375 aa).

48–51 contacts NADP(+); it reads VDTK. 135 to 142 contacts substrate; it reads NAWYTSGW. Residues 188-191, 211-214, and 276-277 each bind NADP(+); these read SSST, SARN, and LD. 297–301 provides a ligand contact to substrate; the sequence is GPELV. 366–367 lines the NADP(+) pocket; it reads VS.

The protein belongs to the zinc-containing alcohol dehydrogenase family. In terms of assembly, monomer.

The catalysed reaction is (2S,4S)-4-hydroxy-4-methylglutamate + 8 malonyl-CoA + 3 S-adenosyl-L-methionine + ATP + 8 NADPH + 11 H(+) = (2S)-3-[(2S)-3,5-dioxo-4-[(2E,4R,6R,8E,10E,12E)-4,6,12-trimethyltetradeca-2,8,10,12-tetraenoyl]pyrrolidin-2-yl]-2-hydroxy-2-methylpropanoate + AMP + 3 S-adenosyl-L-homocysteine + 8 CO2 + diphosphate + 8 NADP(+) + 8 CoA + 6 H2O. Its pathway is secondary metabolite biosynthesis. Its function is as follows. Trans-enoyl reductase; part of the gene cluster that mediates the biosynthesis of the tetramic acid Sch210972, a potential anti-HIV fungal natural product that contains a decalin core. The PKS module of cghG together with the enoylreductase cghC catalyze the formation of the polyketide unit which is then conjugated to 4-hydroxyl-4-methyl glutamate (HMG) by the condensation domain of the cghG NRPS module. One unique structural feature of Sch210972 is the tetramic acid motif proposed to be derived from the non-proteinogenic amino acid HMG, by a Dieckmann-type condensation catalyzed by the reductase domain of cghG. The aldolase cghB catalyzes the aldol condensation of 2 molecules of pyruvic acid to yield the intermediate 4-hydroxyl-4-methyl-2-oxoglutarate (HMOG), which can then be stereoselectively transaminated by an unidentified enzyme to form HMG. The Diels-Alderase cghA then uses the Dieckmann product released by cghG as substrate and catalyzes the Diels-Alder cycloaddition to form the decalin ring of Sch210972. CghA also suppresses the nonenzymatic formation of the alternative stereoisomer. In Chaetomium globosum (strain ATCC 6205 / CBS 148.51 / DSM 1962 / NBRC 6347 / NRRL 1970) (Soil fungus), this protein is Trans-enoyl reductase cghC.